Consider the following 464-residue polypeptide: Argininosuccinate lyase (464 aa).

This sequence belongs to the lyase 1 family. Argininosuccinate lyase subfamily.

It is found in the cytoplasm. The catalysed reaction is 2-(N(omega)-L-arginino)succinate = fumarate + L-arginine. The protein operates within amino-acid biosynthesis; L-arginine biosynthesis; L-arginine from L-ornithine and carbamoyl phosphate: step 3/3. The chain is Argininosuccinate lyase from Herminiimonas arsenicoxydans.